Reading from the N-terminus, the 309-residue chain is Glutaminase 2 (309 aa).

Substrate is bound by residues S65, N117, E162, N169, Y193, Y245, and V263.

This sequence belongs to the glutaminase family. Homotetramer.

The enzyme catalyses L-glutamine + H2O = L-glutamate + NH4(+). In Bacillus subtilis (strain 168), this protein is Glutaminase 2.